The following is a 180-amino-acid chain: Acireductone dioxygenase (180 aa).

Fe(2+)-binding residues include H99, H101, E105, and H145. The Ni(2+) site is built by H99, H101, E105, and H145.

This sequence belongs to the acireductone dioxygenase (ARD) family. In terms of assembly, monomer. Fe(2+) serves as cofactor. The cofactor is Ni(2+).

It carries out the reaction 1,2-dihydroxy-5-(methylsulfanyl)pent-1-en-3-one + O2 = 3-(methylsulfanyl)propanoate + CO + formate + 2 H(+). It catalyses the reaction 1,2-dihydroxy-5-(methylsulfanyl)pent-1-en-3-one + O2 = 4-methylsulfanyl-2-oxobutanoate + formate + 2 H(+). The protein operates within amino-acid biosynthesis; L-methionine biosynthesis via salvage pathway; L-methionine from S-methyl-5-thio-alpha-D-ribose 1-phosphate: step 5/6. In terms of biological role, catalyzes 2 different reactions between oxygen and the acireductone 1,2-dihydroxy-3-keto-5-methylthiopentene (DHK-MTPene) depending upon the metal bound in the active site. Fe-containing acireductone dioxygenase (Fe-ARD) produces formate and 2-keto-4-methylthiobutyrate (KMTB), the alpha-ketoacid precursor of methionine in the methionine recycle pathway. Ni-containing acireductone dioxygenase (Ni-ARD) produces methylthiopropionate, carbon monoxide and formate, and does not lie on the methionine recycle pathway. This Geobacillus kaustophilus (strain HTA426) protein is Acireductone dioxygenase.